Reading from the N-terminus, the 295-residue chain is HTH-type transcriptional regulator TfdS (295 aa).

One can recognise an HTH lysR-type domain in the interval 1 to 58 (MEFRQLRYFVAAAEEGNVGAAARRLHISQPPVTRQIHALEQHLGVLLFERSARGVQLT). Positions 18–37 (VGAAARRLHISQPPVTRQIH) form a DNA-binding region, H-T-H motif.

It belongs to the LysR transcriptional regulatory family.

Its subcellular location is the cytoplasm. In terms of biological role, involved in the regulation of 3-chlorocatechol degradation. Transcriptional regulator of tfdB expression. Acts as a repressor in the absence of its effector (either 2-cis-chlorodiene lactone or chloromaleylacetate) but acts as an activator when its effector is present. The chain is HTH-type transcriptional regulator TfdS (tfdS) from Cupriavidus pinatubonensis (strain JMP 134 / LMG 1197) (Cupriavidus necator (strain JMP 134)).